Reading from the N-terminus, the 483-residue chain is Probable 4-aminobutyrate aminotransferase, mitochondrial (483 aa).

Position 148–149 (148–149 (GT)) interacts with pyridoxal 5'-phosphate. R204 lines the substrate pocket. At K341 the chain carries N6-(pyridoxal phosphate)lysine. T365 provides a ligand contact to pyridoxal 5'-phosphate.

It belongs to the class-III pyridoxal-phosphate-dependent aminotransferase family. As to quaternary structure, homodimer. It depends on pyridoxal 5'-phosphate as a cofactor.

The protein localises to the mitochondrion matrix. The catalysed reaction is 4-aminobutanoate + 2-oxoglutarate = succinate semialdehyde + L-glutamate. It carries out the reaction (S)-3-amino-2-methylpropanoate + 2-oxoglutarate = 2-methyl-3-oxopropanoate + L-glutamate. The sequence is that of Probable 4-aminobutyrate aminotransferase, mitochondrial (gta-1) from Caenorhabditis elegans.